We begin with the raw amino-acid sequence, 130 residues long: Small ribosomal subunit protein uS9 (130 aa).

The segment at 109-130 (RKKERKKYGQPGARAKFQYSKR) is disordered.

Belongs to the universal ribosomal protein uS9 family.

The chain is Small ribosomal subunit protein uS9 from Maridesulfovibrio salexigens (strain ATCC 14822 / DSM 2638 / NCIMB 8403 / VKM B-1763) (Desulfovibrio salexigens).